The sequence spans 260 residues: G patch domain-containing protein 11 (260 aa).

Residues 25 to 61 (MLRQIREARRKEEKRQEANLKNRQKSIKEEEQERRDM) adopt a coiled-coil conformation. Residues 33–60 (RRKEEKRQEANLKNRQKSIKEEEQERRD) are disordered. The region spanning 69–115 (CENKGFALLQKMGYKSGQALGKSGDGIVEPIPLNVKTGKSGIGHETL) is the G-patch domain. The residue at position 123 (Lys123) is an N6-acetyllysine. The disordered stretch occupies residues 187-212 (WLRPEEETEEETEEEKEQDEDEYKSE). The span at 192–210 (EETEEETEEEKEQDEDEYK) shows a compositional bias: acidic residues.

Belongs to the GPATCH11 family.

It is found in the chromosome. The protein localises to the centromere. It localises to the kinetochore. The chain is G patch domain-containing protein 11 (GPATCH11) from Bos taurus (Bovine).